Consider the following 113-residue polypeptide: Small ribosomal subunit protein uS15 (113 aa).

The protein belongs to the universal ribosomal protein uS15 family. In terms of assembly, part of the 30S ribosomal subunit. Forms a bridge to the 50S subunit in the 70S ribosome, contacting the 23S rRNA.

Its function is as follows. One of the primary rRNA binding proteins, it binds directly to 16S rRNA where it helps nucleate assembly of the platform of the 30S subunit by binding and bridging several RNA helices of the 16S rRNA. Functionally, forms an intersubunit bridge (bridge B4) with the 23S rRNA of the 50S subunit in the ribosome. This is Small ribosomal subunit protein uS15 from Haemophilus influenzae (strain PittEE).